The primary structure comprises 490 residues: Bifunctional protein HldE (490 aa).

The ribokinase stretch occupies residues 1–330 (MSRFDTLLQS…RKILPHASLA (330 aa)). 205-208 (NRKE) lines the ATP pocket. D275 is an active-site residue. Residues 358–490 (FTNGCFDILH…LVEKAREGTT (133 aa)) are cytidylyltransferase.

This sequence in the N-terminal section; belongs to the carbohydrate kinase PfkB family. The protein in the C-terminal section; belongs to the cytidylyltransferase family. As to quaternary structure, homodimer.

The catalysed reaction is D-glycero-beta-D-manno-heptose 7-phosphate + ATP = D-glycero-beta-D-manno-heptose 1,7-bisphosphate + ADP + H(+). The enzyme catalyses D-glycero-beta-D-manno-heptose 1-phosphate + ATP + H(+) = ADP-D-glycero-beta-D-manno-heptose + diphosphate. It participates in nucleotide-sugar biosynthesis; ADP-L-glycero-beta-D-manno-heptose biosynthesis; ADP-L-glycero-beta-D-manno-heptose from D-glycero-beta-D-manno-heptose 7-phosphate: step 1/4. Its pathway is nucleotide-sugar biosynthesis; ADP-L-glycero-beta-D-manno-heptose biosynthesis; ADP-L-glycero-beta-D-manno-heptose from D-glycero-beta-D-manno-heptose 7-phosphate: step 3/4. In terms of biological role, catalyzes the phosphorylation of D-glycero-D-manno-heptose 7-phosphate at the C-1 position to selectively form D-glycero-beta-D-manno-heptose-1,7-bisphosphate. Catalyzes the ADP transfer from ATP to D-glycero-beta-D-manno-heptose 1-phosphate, yielding ADP-D-glycero-beta-D-manno-heptose. In Rhodopseudomonas palustris (strain BisB5), this protein is Bifunctional protein HldE.